The primary structure comprises 322 residues: uncharacterized protein (322 aa).

Helical transmembrane passes span 7–27 (IQKI…IGAI), 54–74 (AFAL…LAMF), 87–107 (FVGF…LSGS), 128–148 (IAFC…ITFV), 162–182 (FLSV…YLLI), 209–229 (IGLT…LLPG), 249–269 (GIIS…LFLL), and 287–307 (VIYY…FELL).

This sequence to E.coli YbhN.

It is found in the cell membrane. This is an uncharacterized protein from Synechocystis sp. (strain ATCC 27184 / PCC 6803 / Kazusa).